The primary structure comprises 121 residues: Small ribosomal subunit protein uS13 (121 aa).

The interval 97-121 (PVRGQKTHSNARTRKGPRASRIKKK) is disordered. Residues 101-121 (QKTHSNARTRKGPRASRIKKK) show a composition bias toward basic residues.

This sequence belongs to the universal ribosomal protein uS13 family. As to quaternary structure, part of the 30S ribosomal subunit. Forms a loose heterodimer with protein S19. Forms two bridges to the 50S subunit in the 70S ribosome.

Its function is as follows. Located at the top of the head of the 30S subunit, it contacts several helices of the 16S rRNA. In the 70S ribosome it contacts the 23S rRNA (bridge B1a) and protein L5 of the 50S subunit (bridge B1b), connecting the 2 subunits; these bridges are implicated in subunit movement. Contacts the tRNAs in the A and P-sites. The protein is Small ribosomal subunit protein uS13 of Kosmotoga olearia (strain ATCC BAA-1733 / DSM 21960 / TBF 19.5.1).